A 55-amino-acid chain; its full sequence is Potassium channel toxin alpha-KTx 17.1 (55 aa).

Positions Met1–Ala23 are cleaved as a signal peptide. Pyrrolidone carboxylic acid is present on Gln24. 3 disulfides stabilise this stretch: Cys27/Cys43, Cys33/Cys48, and Cys37/Cys50. Threonine amide is present on Thr53.

The protein belongs to the short scorpion toxin superfamily. Potassium channel inhibitor family. Alpha-KTx 17 subfamily. As to expression, expressed by the venom gland.

It is found in the secreted. Blocker of potassium channels, which inhibits both the delayed rectifier and fast transient potassium current. The inhibition is reversible and voltage-independent. It causes a depolarizing shift of the steady-state activation curve of the currents, without changing their steady-state inactivation behavior. In Olivierus martensii (Manchurian scorpion), this protein is Potassium channel toxin alpha-KTx 17.1.